The chain runs to 87 residues: uncharacterized protein (87 aa).

The 2Fe-2S ferredoxin-type domain maps to 4–87 (SKIIILNNNK…TISGSILIKI (84 aa)). 4 residues coordinate [2Fe-2S] cluster: Cys39, Cys44, Cys47, and Cys75.

Requires [2Fe-2S] cluster as cofactor.

This is an uncharacterized protein from Buchnera aphidicola subsp. Baizongia pistaciae (strain Bp).